An 880-amino-acid polypeptide reads, in one-letter code: Valine--tRNA ligase (880 aa).

A 'HIGH' region motif is present at residues 49-59; that stretch reads PNVTGKLHLGH. A 'KMSKS' region motif is present at residues 525–529; that stretch reads KMSKS. Position 528 (K528) interacts with ATP. The stretch at 809-880 forms a coiled coil; the sequence is LEGLINIEEE…VKARLAELKR (72 aa).

This sequence belongs to the class-I aminoacyl-tRNA synthetase family. ValS type 1 subfamily. Monomer.

The protein resides in the cytoplasm. It carries out the reaction tRNA(Val) + L-valine + ATP = L-valyl-tRNA(Val) + AMP + diphosphate. Functionally, catalyzes the attachment of valine to tRNA(Val). As ValRS can inadvertently accommodate and process structurally similar amino acids such as threonine, to avoid such errors, it has a 'posttransfer' editing activity that hydrolyzes mischarged Thr-tRNA(Val) in a tRNA-dependent manner. The polypeptide is Valine--tRNA ligase (Geobacillus kaustophilus (strain HTA426)).